A 232-amino-acid chain; its full sequence is 7-cyano-7-deazaguanine synthase (232 aa).

8–18 lines the ATP pocket; that stretch reads FSGGQDSTTCL. Zn(2+)-binding residues include cysteine 187, cysteine 196, cysteine 199, and cysteine 202.

It belongs to the QueC family. Zn(2+) is required as a cofactor.

The enzyme catalyses 7-carboxy-7-deazaguanine + NH4(+) + ATP = 7-cyano-7-deazaguanine + ADP + phosphate + H2O + H(+). It participates in purine metabolism; 7-cyano-7-deazaguanine biosynthesis. Its function is as follows. Catalyzes the ATP-dependent conversion of 7-carboxy-7-deazaguanine (CDG) to 7-cyano-7-deazaguanine (preQ(0)). This chain is 7-cyano-7-deazaguanine synthase, found in Shewanella denitrificans (strain OS217 / ATCC BAA-1090 / DSM 15013).